Here is a 219-residue protein sequence, read N- to C-terminus: Chloramphenicol acetyltransferase (219 aa).

His-190 (proton acceptor) is an active-site residue.

This sequence belongs to the chloramphenicol acetyltransferase family. As to quaternary structure, homotrimer.

It catalyses the reaction chloramphenicol + acetyl-CoA = chloramphenicol 3-acetate + CoA. Functionally, this enzyme is an effector of chloramphenicol resistance in bacteria. This is Chloramphenicol acetyltransferase (catQ) from Clostridium perfringens.